A 445-amino-acid polypeptide reads, in one-letter code: Meiosis-specific serine/threonine-protein kinase mek1 (445 aa).

The FHA domain occupies 62 to 116 (VSVGRSNTCNYQLLQFTASYKHFRVYSVLIDDDMDPLVYCEDQSSNGTFLNHRLI). Positions 160–421 (NITQRLLGIG…VKQCLSHPWF (262 aa)) constitute a Protein kinase domain. Residues 166–174 (LGIGGFSRI) and Lys-189 each bind ATP. Asp-281 functions as the Proton acceptor in the catalytic mechanism.

It belongs to the protein kinase superfamily. CAMK Ser/Thr protein kinase family. CHEK2 subfamily.

The enzyme catalyses L-seryl-[protein] + ATP = O-phospho-L-seryl-[protein] + ADP + H(+). It carries out the reaction L-threonyl-[protein] + ATP = O-phospho-L-threonyl-[protein] + ADP + H(+). Probable protein kinase required for meiotic recombination. The sequence is that of Meiosis-specific serine/threonine-protein kinase mek1 (mek1) from Schizosaccharomyces pombe (strain 972 / ATCC 24843) (Fission yeast).